The sequence spans 487 residues: MDYFKNDLASIHDDLVNKKYSVEELTKSTFDNIKKVDKEIEAFLKLDEERALEKARKIDERGVKADSILDGIGIGIKDNIVTKDLTTTAASKMLENFEPIYNATVMDKLNDAGMITVGKLNMDEFAMGSSTENSAFKITKNVWDTTKVPGGSSGGSAAAVASGQVLASLGSDTGGSIRQPAAFNGIVGVKPTYGRVSRYGLIAFASSLDQIGPLTRTVKDNALVLNAISGHDAHDFTSSSREVPDFTKGIEDGVKGMRIAVPKEYFGEGVDEDVAKAVKDAVKTFESLGATVDEISLPHSKYGVPVYYIIASSEASSNLQRYDGIRYGFRAKDVKNLEDVYVRSRSEGFGDEVKRRIMLGTFSLSAGSYDAFFKKAAQVRTLICQDFENVYKDYDLILAPTSPTTAYGIGEEINDPVTMYMNDILTIPVNLAGLPGMSLPAGFSNGLPIGLQLIAPRFAESTMYRAGYAFEQSTDFHKAIPTLGGQN.

Residues lysine 77 and serine 152 each act as charge relay system in the active site. Serine 176 functions as the Acyl-ester intermediate in the catalytic mechanism.

The protein belongs to the amidase family. GatA subfamily. In terms of assembly, heterotrimer of A, B and C subunits.

The enzyme catalyses L-glutamyl-tRNA(Gln) + L-glutamine + ATP + H2O = L-glutaminyl-tRNA(Gln) + L-glutamate + ADP + phosphate + H(+). In terms of biological role, allows the formation of correctly charged Gln-tRNA(Gln) through the transamidation of misacylated Glu-tRNA(Gln) in organisms which lack glutaminyl-tRNA synthetase. The reaction takes place in the presence of glutamine and ATP through an activated gamma-phospho-Glu-tRNA(Gln). This Ligilactobacillus salivarius (strain UCC118) (Lactobacillus salivarius) protein is Glutamyl-tRNA(Gln) amidotransferase subunit A.